Consider the following 155-residue polypeptide: Aspartate carbamoyltransferase regulatory chain (155 aa).

Zn(2+) contacts are provided by Cys110, Cys115, Cys139, and Cys142.

This sequence belongs to the PyrI family. Contains catalytic and regulatory chains. The cofactor is Zn(2+).

Involved in allosteric regulation of aspartate carbamoyltransferase. The chain is Aspartate carbamoyltransferase regulatory chain from Yersinia pseudotuberculosis serotype IB (strain PB1/+).